The primary structure comprises 140 residues: Protein NrdI (140 aa).

The protein belongs to the NrdI family.

In terms of biological role, probably involved in ribonucleotide reductase function. The polypeptide is Protein NrdI (Photorhabdus laumondii subsp. laumondii (strain DSM 15139 / CIP 105565 / TT01) (Photorhabdus luminescens subsp. laumondii)).